The primary structure comprises 328 residues: B3 domain-containing protein At5g60140 (328 aa).

Positions 13-109 (SKFFKPYLPS…FFNFSIFDHE (97 aa)) form a DNA-binding region, TF-B3. A disordered region spans residues 145 to 221 (LNSDDSDDSD…EDEDDLEDED (77 aa)). Composition is skewed to acidic residues over residues 148–182 (DDSD…AEDG) and 190–221 (GLED…EDED).

The protein localises to the nucleus. The chain is B3 domain-containing protein At5g60140 from Arabidopsis thaliana (Mouse-ear cress).